Here is a 420-residue protein sequence, read N- to C-terminus: Transcription termination factor Rho (420 aa).

Residues 49 to 124 enclose the Rho RNA-BD domain; it reads DIFGGGVLEI…LKVDQVNDDK (76 aa). ATP contacts are provided by residues 170–175, 182–187, and arginine 213; these read GKGQRG and KAGKTM.

It belongs to the Rho family. In terms of assembly, homohexamer. The homohexamer assembles into an open ring structure.

In terms of biological role, facilitates transcription termination by a mechanism that involves Rho binding to the nascent RNA, activation of Rho's RNA-dependent ATPase activity, and release of the mRNA from the DNA template. This chain is Transcription termination factor Rho, found in Haemophilus influenzae (strain ATCC 51907 / DSM 11121 / KW20 / Rd).